The primary structure comprises 377 residues: Testis-expressed protein 13A (377 aa).

The required for repression of transcription stretch occupies residues 92–377 (WLQDLSSLHK…CGKGIWLQNP (286 aa)). Residues 122 to 156 (QKEVALQLQMAQAKLEEVQRERDLLRLKILQAELR) are a coiled coil. An LRR repeat occupies 142–165 (ERDLLRLKILQAELRALPNAVRPA). The RanBP2-type zinc-finger motif lies at 345–369 (RPGDWDCPWCKAVNFSRRENCFHCG). Positions 351, 354, 365, and 368 each coordinate Zn(2+).

This sequence belongs to the TEX13 family. As to quaternary structure, interacts with CNOT1; the interaction may inhibit CNOT1 binding to mRNA and subsequently CNOT1-mediated mRNA degradation.

Functionally, binds to ssRNA containing the consensus sequence 5'-AGGUAA-3'. Plays a role in transcriptional repression. Required for rapid sperm motility and timely degradation of mRNA via its interaction with CNOT1. The chain is Testis-expressed protein 13A from Mus musculus (Mouse).